The primary structure comprises 393 residues: Glycerol-3-phosphate dehydrogenase [NAD(+)] 1 (393 aa).

Residues 45–50, Phe133, Lys157, and Ala190 each bind NAD(+); that span reads GSGNWG. Lys157 is a substrate binding site. The active-site Proton acceptor is the Lys250. Residues Arg316 and Gln345 each coordinate NAD(+). 316-317 contacts substrate; sequence RN.

Belongs to the NAD-dependent glycerol-3-phosphate dehydrogenase family.

It carries out the reaction sn-glycerol 3-phosphate + NAD(+) = dihydroxyacetone phosphate + NADH + H(+). This chain is Glycerol-3-phosphate dehydrogenase [NAD(+)] 1 (gpd1), found in Cyberlindnera jadinii (Torula yeast).